The sequence spans 227 residues: ATP-dependent dethiobiotin synthetase BioD (227 aa).

13–18 (DIGKTY) serves as a coordination point for ATP. Thr-17 lines the Mg(2+) pocket. Lys-38 is an active-site residue. Residue Ser-42 coordinates substrate. ATP is bound by residues Asp-55, 116–119 (EGSG), and 179–180 (NN). The Mg(2+) site is built by Asp-55 and Glu-116.

It belongs to the dethiobiotin synthetase family. Homodimer. The cofactor is Mg(2+).

It localises to the cytoplasm. It catalyses the reaction (7R,8S)-7,8-diammoniononanoate + CO2 + ATP = (4R,5S)-dethiobiotin + ADP + phosphate + 3 H(+). Its pathway is cofactor biosynthesis; biotin biosynthesis; biotin from 7,8-diaminononanoate: step 1/2. Catalyzes a mechanistically unusual reaction, the ATP-dependent insertion of CO2 between the N7 and N8 nitrogen atoms of 7,8-diaminopelargonic acid (DAPA, also called 7,8-diammoniononanoate) to form a ureido ring. The sequence is that of ATP-dependent dethiobiotin synthetase BioD from Clostridium botulinum (strain Kyoto / Type A2).